The primary structure comprises 102 residues: Small ribosomal subunit protein uS10 (102 aa).

It belongs to the universal ribosomal protein uS10 family. In terms of assembly, part of the 30S ribosomal subunit.

Involved in the binding of tRNA to the ribosomes. The protein is Small ribosomal subunit protein uS10 of Methanothermobacter thermautotrophicus (strain ATCC 29096 / DSM 1053 / JCM 10044 / NBRC 100330 / Delta H) (Methanobacterium thermoautotrophicum).